A 263-amino-acid polypeptide reads, in one-letter code: HTH-type transcriptional regulator KdgR (263 aa).

The region spanning 13-74 is the HTH iclR-type domain; it reads VSSVLKVFGI…GESEKYSLTL (62 aa). Residues 34 to 53 constitute a DNA-binding region (H-T-H motif); sequence ITELSQRVMMSKSTVYRFLQ. Positions 89-258 constitute an IclR-ED domain; the sequence is LIRSADIQMR…ARKISAQMGY (170 aa).

It localises to the cytoplasm. Functionally, transcriptional repressor that negatively regulates the expression of kdgT, kdgK and kdgA, which encode proteins involved in transport and catabolism of 2-keto-3-deoxygluconate (KDG). Also represses expression of eda, which encodes the Entner-Doudoroff aldolase, by binding to its P2 promoter region. This Escherichia coli (strain K12) protein is HTH-type transcriptional regulator KdgR.